The primary structure comprises 254 residues: MSSAFTVVIPARYASTRLPGKPLQLIAGKPMIQWVWEQARKSSAERVVVATDDQRIVEACQGFGAEALLTREDHNSGTDRLAEVAAQLGLAADAIVVNVQGDEPLIPPSVIDQVAANLAAHTEARMATLAEPIEDVQTLFNPNVVKVVSDLNGLALTFSRATLPWARDAFAQSREQLPEGVPYRRHIGIYAYRAGFLHDFVSWGPCWLENTESLEQLRALWHGVRIHVADALEAPPTGVDTAEDLERVRRLLEA.

The protein belongs to the KdsB family.

The protein localises to the cytoplasm. The catalysed reaction is 3-deoxy-alpha-D-manno-oct-2-ulosonate + CTP = CMP-3-deoxy-beta-D-manno-octulosonate + diphosphate. The protein operates within nucleotide-sugar biosynthesis; CMP-3-deoxy-D-manno-octulosonate biosynthesis; CMP-3-deoxy-D-manno-octulosonate from 3-deoxy-D-manno-octulosonate and CTP: step 1/1. Its pathway is bacterial outer membrane biogenesis; lipopolysaccharide biosynthesis. Functionally, activates KDO (a required 8-carbon sugar) for incorporation into bacterial lipopolysaccharide in Gram-negative bacteria. The chain is 3-deoxy-manno-octulosonate cytidylyltransferase from Pseudomonas fluorescens (strain ATCC BAA-477 / NRRL B-23932 / Pf-5).